The following is a 212-amino-acid chain: Regulator of G-protein signaling 2 (212 aa).

Disordered stretches follow at residues 11–33 and 48–69; these read HDCG…REKM and FLQN…PQTF. The segment at 32–66 is necessary for membrane association; the sequence is KMKRTLLKDWKTRLSYFLQNSSSPGKPKTGKKSKP. The segment at 79–116 is necessary to inhibit protein synthesis; the sequence is LWAEAFDELLASKYGLAAFRAFLKSEFCEENIEFWLAC. The RGS domain occupies 83 to 199; sequence AFDELLASKY…LESEFYQDLC (117 aa).

As to quaternary structure, interacts with GNAQ. Does not interact with GNAI1 and GNAI3. Interacts with EIF2B5. Interacts with PRKG1 (isoform alpha). Post-translationally, phosphorylated by protein kinase C. Phosphorylation by PRKG1 leads to activation of RGS2 activity.

The protein resides in the cell membrane. Its subcellular location is the cytoplasm. It is found in the nucleus. The protein localises to the nucleolus. Regulates G protein-coupled receptor signaling cascades. Inhibits signal transduction by increasing the GTPase activity of G protein alpha subunits, thereby driving them into their inactive GDP-bound form. It is involved in the negative regulation of the angiotensin-activated signaling pathway. Plays a role in the regulation of blood pressure in response to signaling via G protein-coupled receptors and GNAQ. Plays a role in regulating the constriction and relaxation of vascular smooth muscle. Binds EIF2B5 and blocks its activity, thereby inhibiting the translation of mRNA into protein. In Sus scrofa (Pig), this protein is Regulator of G-protein signaling 2 (RGS2).